Reading from the N-terminus, the 432-residue chain is Probable N-acetylmuramoyl-L-alanine amidase AmiB (432 aa).

The first 20 residues, 1–20, serve as a signal peptide directing secretion; it reads MKTKILFFLFFSTFSFSIFA. The region spanning 25 to 244 is the MurNAc-LAA domain; sequence IAIDPGHGGK…IAYMIYEGLV (220 aa). LysM domains lie at 292-335 and 385-429; these read IRHI…SIKI and LYHK…KIKL.

It belongs to the N-acetylmuramoyl-L-alanine amidase 3 family.

Its subcellular location is the periplasm. The catalysed reaction is Hydrolyzes the link between N-acetylmuramoyl residues and L-amino acid residues in certain cell-wall glycopeptides.. Cell-wall hydrolase involved in septum cleavage during cell division. This chain is Probable N-acetylmuramoyl-L-alanine amidase AmiB (amiB), found in Haemophilus influenzae (strain ATCC 51907 / DSM 11121 / KW20 / Rd).